The sequence spans 281 residues: MNIVNTIKDVRLIIKKWKDENLSIGYVPTMGYLHEGHASLIKKAREENDKVIVSIFVNPIQFGPKEDYSTYPRDLVKDSSLCEKFGVDLIFNPETSEMYPNKIYSHINVDILTENLCGEKRPGHFQGVCTVLTKFFNILNPTKAYFGEKDAQQLAVVRKMVEDLNFPIEIIGCPIIREDDGLAKSSRNAYLNKQERKSALILNKSLKEALNALESEEKNSNNIKDIIVSKLNKEPLAKIDYVSIVDSITLQSVEKIQSPILVAIAVYIGKTRLIDNFTFKL.

30–37 (MGYLHEGH) provides a ligand contact to ATP. The Proton donor role is filled by histidine 37. Glutamine 61 serves as a coordination point for (R)-pantoate. Glutamine 61 is a binding site for beta-alanine. An ATP-binding site is contributed by 147–150 (GEKD). Glutamine 153 lines the (R)-pantoate pocket. ATP is bound by residues isoleucine 176 and 184-187 (KSSR).

The protein belongs to the pantothenate synthetase family. In terms of assembly, homodimer.

Its subcellular location is the cytoplasm. It catalyses the reaction (R)-pantoate + beta-alanine + ATP = (R)-pantothenate + AMP + diphosphate + H(+). Its pathway is cofactor biosynthesis; (R)-pantothenate biosynthesis; (R)-pantothenate from (R)-pantoate and beta-alanine: step 1/1. Functionally, catalyzes the condensation of pantoate with beta-alanine in an ATP-dependent reaction via a pantoyl-adenylate intermediate. The chain is Pantothenate synthetase from Clostridium botulinum (strain Kyoto / Type A2).